Here is a 207-residue protein sequence, read N- to C-terminus: dTTP/UTP pyrophosphatase (207 aa).

Asp80 (proton acceptor) is an active-site residue.

The protein belongs to the Maf family. YhdE subfamily. The cofactor is a divalent metal cation.

Its subcellular location is the cytoplasm. The enzyme catalyses dTTP + H2O = dTMP + diphosphate + H(+). It catalyses the reaction UTP + H2O = UMP + diphosphate + H(+). In terms of biological role, nucleoside triphosphate pyrophosphatase that hydrolyzes dTTP and UTP. May have a dual role in cell division arrest and in preventing the incorporation of modified nucleotides into cellular nucleic acids. The polypeptide is dTTP/UTP pyrophosphatase (maf1) (Agrobacterium fabrum (strain C58 / ATCC 33970) (Agrobacterium tumefaciens (strain C58))).